A 336-amino-acid chain; its full sequence is NEDD4 family-interacting protein 2 (336 aa).

Disordered regions lie at residues 1–24 and 37–156; these read MARR…RGAP and SAAA…SITV. Topologically, residues 1 to 231 are cytoplasmic; that stretch reads MARRRSQRVC…ADQLRVGNDG (231 aa). A compositionally biased stretch (low complexity) spans 37–48; the sequence is SAAAAGATGSEE. Basic and acidic residues predominate over residues 78–99; it reads EHGEDSLSRKPDPEPGRMDHHQ. Residues 148-151 form an interaction with NEDD4 region; sequence PPPY. Residues 148 to 151 carry the PPxY motif 1 motif; it reads PPPY. 4 positions are modified to phosphotyrosine; by SRC: Tyr151, Tyr167, Tyr171, and Tyr177. 2 consecutive short sequence motifs (PPxY motif) follow at residues 174–177 and 184–186; these read PPPY and PTY. A helical membrane pass occupies residues 232 to 252; that stretch reads IFMLAFFMAFIFNWLGFCLSF. Residues 253 to 257 are Extracellular-facing; sequence CITNT. A helical transmembrane segment spans residues 258 to 278; that stretch reads IAGRYGAICGFGLSLIKWILI. The Cytoplasmic segment spans residues 279-287; it reads VRFSDYFTG. Residues 288-308 form a helical membrane-spanning segment; sequence YFNGQYWLWWIFLVLGLLLFF. Residues 309 to 336 lie on the Extracellular side of the membrane; the sequence is RGFVNYLKVRNMSESMAAAHRTRYFFLL.

In terms of assembly, forms heterodimers with NDFIP1. Interacts with HECT domain-containing E3 ubiquitin-protein ligases, including NEDD4. Interacts with NEDD4L. Interacts with PTEN. When phosphorylated at Tyr-167, interacts with SRC and LYN SH2 domain. May thus act as a scaffold that recruits SRC to NDFIP1, enhancing NDFIP1 phosphorylation. Interacts with SLC11A2/DMT1. May interact with phosphorylated EGFR. Interacts with KCNH2. In terms of processing, ubiquitinated by NEDD4 and ITCH. Also ubiquitinated by NEDD4L. Ubiquitination by NEDD4 or NEDD4L does not affect turnover. Post-translationally, undergoes transient tyrosine-phosphorylation following EGF stimulation, most probably catalyzed by SRC. Phosphorylation on Tyr-151, Tyr-171 and Tyr-177 are dependent on the phosphorylation on Tyr-167. Also phosphorylated by LYN and FYN. As to expression, expressed in brain, lung, heart, skeletal muscle, kidney, liver and placenta.

Its subcellular location is the endosome membrane. It localises to the golgi apparatus membrane. The protein localises to the endosome. The protein resides in the multivesicular body membrane. Its function is as follows. Activates HECT domain-containing E3 ubiquitin-protein ligases, including ITCH, NEDD4, NEDD4L, SMURF2, WWP1 and WWP2, and consequently modulates the stability of their targets. As a result, may control many cellular processes. Recruits ITCH, NEDD4 and SMURF2 to endosomal membranes. Negatively regulates KCNH2 potassium channel activity by decreasing its cell-surface expression and interfering with channel maturation through recruitment of NEDD4L to the Golgi apparatus and multivesicular body where it mediates KCNH2 degradation. May modulate EGFR signaling. Together with NDFIP1, limits the cytokine signaling and expansion of effector Th2 T-cells by promoting degradation of JAK1, probably by ITCH- and NEDD4L-mediated ubiquitination. The polypeptide is NEDD4 family-interacting protein 2 (NDFIP2) (Homo sapiens (Human)).